The chain runs to 421 residues: G/T mismatch-specific thymine DNA glycosylase (421 aa).

Residues 45–108 (PNMATVTEQQ…STKSKEKQEK (64 aa)) are disordered. The segment covering 77-89 (RAAEPQEPVEPKK) has biased composition (basic and acidic residues). A compositionally biased stretch (basic residues) spans 91 to 100 (ATSKKSGKST). Glycyl lysine isopeptide (Lys-Gly) (interchain with G-Cter in SUMO2) cross-links involve residues lysine 114 and lysine 259. A Glycyl lysine isopeptide (Lys-Gly) (interchain with G-Cter in SUMO); alternate cross-link involves residue lysine 341. Residue lysine 341 forms a Glycyl lysine isopeptide (Lys-Gly) (interchain with G-Cter in SUMO2); alternate linkage.

The protein belongs to the uracil-DNA glycosylase (UDG) superfamily. TDG/mug family. As to quaternary structure, homodimer. Interacts with AICDA and GADD45A. In terms of processing, sumoylation on Lys-341 by either SUMO1 or SUMO2 induces dissociation of the product DNA.

The protein localises to the nucleus. The enzyme catalyses Hydrolyzes mismatched double-stranded DNA and polynucleotides, releasing free thymine.. Functionally, DNA glycosylase that plays a key role in active DNA demethylation: specifically recognizes and binds 5-formylcytosine (5fC) and 5-carboxylcytosine (5caC) in the context of CpG sites and mediates their excision through base-excision repair (BER) to install an unmethylated cytosine. Cannot remove 5-hydroxymethylcytosine (5hmC). According to an alternative model, involved in DNA demethylation by mediating DNA glycolase activity toward 5-hydroxymethyluracil (5hmU) produced by deamination of 5hmC. Also involved in DNA repair by acting as a thymine-DNA glycosylase that mediates correction of G/T mispairs to G/C pairs: in the DNA of higher eukaryotes, hydrolytic deamination of 5-methylcytosine to thymine leads to the formation of G/T mismatches. Its role in the repair of canonical base damage is however minor compared to its role in DNA demethylation. It is capable of hydrolyzing the carbon-nitrogen bond between the sugar-phosphate backbone of the DNA and a mispaired thymine. In addition to the G/T, it can remove thymine also from C/T and T/T mispairs in the order G/T &gt;&gt; C/T &gt; T/T. It has no detectable activity on apyrimidinic sites and does not catalyze the removal of thymine from A/T pairs or from single-stranded DNA. It can also remove uracil and 5-bromouracil from mispairs with guanine. This is G/T mismatch-specific thymine DNA glycosylase (Tdg) from Mus musculus (Mouse).